The primary structure comprises 94 residues: DNA-binding protein HU (94 aa).

The protein belongs to the bacterial histone-like protein family. Homodimer.

Functionally, histone-like DNA-binding protein which is capable of wrapping DNA to stabilize it, and thus to prevent its denaturation under extreme environmental conditions. It is essential for heterocyst differentiation. This Nostoc sp. (strain PCC 7120 / SAG 25.82 / UTEX 2576) protein is DNA-binding protein HU (hup).